Here is a 578-residue protein sequence, read N- to C-terminus: Vi polysaccharide biosynthesis protein VipC/TviE (578 aa).

The protein operates within glycan metabolism; Vi-antigen biosynthesis. It functions in the pathway capsule biogenesis; capsule polysaccharide biosynthesis. In Salmonella typhi, this protein is Vi polysaccharide biosynthesis protein VipC/TviE (vipC).